The following is a 112-amino-acid chain: Nitrogenase-stabilizing/protective protein NifW (112 aa).

Belongs to the NifW family. As to quaternary structure, homotrimer; associates with NifD.

Its function is as follows. May protect the nitrogenase Fe-Mo protein from oxidative damage. The polypeptide is Nitrogenase-stabilizing/protective protein NifW (Paraburkholderia xenovorans (strain LB400)).